Consider the following 140-residue polypeptide: Cysteine desulfuration protein SufE (140 aa).

The active-site Cysteine persulfide intermediate is the cysteine 51.

The protein belongs to the SufE family. Homodimer. Interacts with SufS.

Its subcellular location is the cytoplasm. Its pathway is cofactor biosynthesis; iron-sulfur cluster biosynthesis. Participates in cysteine desulfuration mediated by SufS. Cysteine desulfuration mobilizes sulfur from L-cysteine to yield L-alanine and constitutes an essential step in sulfur metabolism for biosynthesis of a variety of sulfur-containing biomolecules. Functions as a sulfur acceptor for SufS, by mediating the direct transfer of the sulfur atom from the S-sulfanylcysteine of SufS, an intermediate product of cysteine desulfuration process. This chain is Cysteine desulfuration protein SufE, found in Yersinia pestis bv. Antiqua (strain Antiqua).